The primary structure comprises 724 residues: MAAEALAAEAVASRLARQEEDIRWLWAEVHRLRDEQLNAPDRCQAEGPCLTREVAQLRAENRELRHCLYRLRLCLAEELSHQARLESAARAEAGRAAAGAQPPPSQSLEEDVKKEIDPDNEVKNPPNFMKERLKFFEILKKDHQLLLAIYEKKGDSSNVITVRVADGRTVKGEAWKTTPYQVAAEISQELAETTVVAKVNGELWDLDRPLEGDATVELLTFEDEEARAVYWHSSAHVLGEALELHYGGLLCCSPPGDGSFHYDVYLEDRAVSSAELPVLESMCQAIIKEQQPFERLEVSTKVLLDLFKYNKFKCRILKEKVATPTTTVYRCGPLVELCKGPHVRHTGTIKVIKIFKNSLAYWADNPEMEMLQRVYGVSFPDEQRMAAWEELQEEARARDHRTIGKEQELFFFHDLSPGSCFFLPRGACIYNTLIDFIREQHHQRNFTEVLSPNMYSCKLWEASGHWQHYSENMFTFDIDKDTFALKPMNCPGHCLMFAHRPRSWREMPIRLADFGVLHRNEPSGALSGLTCVRRFQQDDAHIFCTVGQLEEEIKGCLQFLQSVYSTFGFSFQLNLSTRPENFLGKIELWDEAEKQLQNSLMEFGKPWKINPGEGAFYGPKIDLEIKDALGRYHQCATIQLDFQLPIRFNLTYVSKDGDDKKNPVIIHQAILGSVERMIAILSENYGGKWPFWLSPRQVMVIPVGPTCEKYALQWLEKRKRQIML.

Alanine 2 is subject to N-acetylalanine. A coiled-coil region spans residues 44 to 72; the sequence is QAEGPCLTREVAQLRAENRELRHCLYRLR. The segment at 90–112 is disordered; the sequence is RAEAGRAAAGAQPPPSQSLEEDV. The 66-residue stretch at 155–220 folds into the TGS domain; that stretch reads DSSNVITVRV…EGDATVELLT (66 aa). The residue at position 451 (serine 451) is a Phosphoserine.

Belongs to the class-II aminoacyl-tRNA synthetase family. May be a component of the multisynthetase complex (MSC), a large multi-subunit complex which contains at least eight different aminoacyl-tRNA synthetases plus three auxillary subunits AIMP1, AIMP2 and EEF1E1. Interacts with the MSC components EPRS1, AIMP1, AIMP2 and KARS1.

The protein resides in the cytoplasm. It is found in the nucleus. It carries out the reaction tRNA(Thr) + L-threonine + ATP = L-threonyl-tRNA(Thr) + AMP + diphosphate + H(+). Functionally, catalyzes the attachment of threonine to tRNA(Thr) in a two-step reaction: threonine is first activated by ATP to form Thr-AMP and then transferred to the acceptor end of tRNA(Thr). Also edits incorrectly charged tRNA(Thr) via its editing domain, at the post-transfer stage. In Bos taurus (Bovine), this protein is Threonine--tRNA ligase 2, cytoplasmic (TARS3).